The sequence spans 234 residues: MGQKVNPVGLRLGINRNWTSRWFPSARTAPSNIDEDNKIRKFLKKELYYAGVSEIVIERAAKKLRVTVVAARPGLIIGKKGVDIEKVKEGLKTLIKKEVSINIKEVKRPQADAQLAAENVATQLEKRVAFRRAMKKVMQAALKSGAKGIKVRVSGRLAGAEIARTEWYMEGRVPLHTLRAKIDYGFAEAMTVYGIIGVKVWIFKGEVLQKGIQFEKKEEAKEEREPRRSRRGRQ.

Positions 39–107 constitute a KH type-2 domain; that stretch reads IRKFLKKELY…EVSINIKEVK (69 aa).

This sequence belongs to the universal ribosomal protein uS3 family. Part of the 30S ribosomal subunit. Forms a tight complex with proteins S10 and S14.

Its function is as follows. Binds the lower part of the 30S subunit head. Binds mRNA in the 70S ribosome, positioning it for translation. This chain is Small ribosomal subunit protein uS3, found in Helicobacter pylori (strain G27).